Here is a 257-residue protein sequence, read N- to C-terminus: Membrane protein insertase YidC 1 (257 aa).

The N-terminal stretch at 1–20 (MYRKFGMAAMLVSILLLMTG) is a signal peptide. C21 is lipidated: N-palmitoyl cysteine. C21 is lipidated: S-diacylglycerol cysteine. The next 5 membrane-spanning stretches (helical) occupy residues 35–55 (IWDS…ANAF), 59–79 (FGLA…PLMI), 129–149 (LAGC…YHAI), 160–180 (FLWF…AGIT), and 205–225 (VMIL…WVIG).

It belongs to the OXA1/ALB3/YidC family. Type 2 subfamily.

It is found in the cell membrane. Its function is as follows. Required for the insertion and/or proper folding and/or complex formation of integral membrane proteins into the membrane. Involved in integration of membrane proteins that insert both dependently and independently of the Sec translocase complex, as well as at least some lipoproteins. This chain is Membrane protein insertase YidC 1, found in Halalkalibacterium halodurans (strain ATCC BAA-125 / DSM 18197 / FERM 7344 / JCM 9153 / C-125) (Bacillus halodurans).